A 130-amino-acid chain; its full sequence is Abscisic acid and environmental stress-inducible protein TAS14 (130 aa).

The segment at 1–130 (MAQYGNQDQM…KIKDKIPGMH (130 aa)) is disordered. Over residues 27–58 (QGTGTGGMMGGTGTGGMMGGTGGEYGTQGMGT) the composition is skewed to gly residues. 2 stretches are compositionally biased toward basic and acidic residues: residues 61 to 73 (HHHEGQQQLRRSD) and 92 to 130 (KEKIMEKMPGQHEGEYGQTTGEEKKGMMDKIKDKIPGMH).

It belongs to the plant dehydrin family.

The protein is Abscisic acid and environmental stress-inducible protein TAS14 (TAS14) of Solanum lycopersicum (Tomato).